Consider the following 519-residue polypeptide: Ion-translocating oxidoreductase complex subunit C (519 aa).

2 4Fe-4S ferredoxin-type domains span residues 372 to 401 (ETPE…FELN) and 411 to 440 (GAAK…VQSF). Cys-381, Cys-384, Cys-387, Cys-391, Cys-420, Cys-423, Cys-426, and Cys-430 together coordinate [4Fe-4S] cluster. Residues 494 to 519 (KAEEAAAAAAMPPPATATAIQGEATP) are disordered.

It belongs to the 4Fe4S bacterial-type ferredoxin family. RnfC subfamily. As to quaternary structure, the complex is composed of six subunits: RnfA, RnfB, RnfC, RnfD, RnfE and RnfG. [4Fe-4S] cluster serves as cofactor.

Its subcellular location is the cellular chromatophore membrane. In terms of biological role, part of a membrane-bound complex that couples electron transfer with translocation of ions across the membrane. Required for nitrogen fixation. Involved in electron transfer to nitrogenase. This Rhodobacter capsulatus (Rhodopseudomonas capsulata) protein is Ion-translocating oxidoreductase complex subunit C.